A 172-amino-acid polypeptide reads, in one-letter code: dCTP deaminase, dUMP-forming (172 aa).

DCTP-binding positions include 93-98 (RSSVGR), Asp111, 119-121 (TLE), Gln138, and Tyr151. The active-site Proton donor/acceptor is Glu121.

Belongs to the dCTP deaminase family. In terms of assembly, homotrimer.

It carries out the reaction dCTP + 2 H2O = dUMP + NH4(+) + diphosphate. It functions in the pathway pyrimidine metabolism; dUMP biosynthesis; dUMP from dCTP: step 1/1. In terms of biological role, bifunctional enzyme that catalyzes both the deamination of dCTP to dUTP and the hydrolysis of dUTP to dUMP without releasing the toxic dUTP intermediate. In Hathewaya histolytica (Clostridium histolyticum), this protein is dCTP deaminase, dUMP-forming.